We begin with the raw amino-acid sequence, 101 residues long: NAD(P)H-quinone oxidoreductase subunit 4L, chloroplastic (101 aa).

The next 3 helical transmembrane spans lie at 2-22 (ILEH…YGLI), 32-52 (MCLE…SDFF), and 61-81 (IFSI…LAIV).

The protein belongs to the complex I subunit 4L family. In terms of assembly, NDH is composed of at least 16 different subunits, 5 of which are encoded in the nucleus.

It is found in the plastid. The protein localises to the chloroplast thylakoid membrane. It carries out the reaction a plastoquinone + NADH + (n+1) H(+)(in) = a plastoquinol + NAD(+) + n H(+)(out). The catalysed reaction is a plastoquinone + NADPH + (n+1) H(+)(in) = a plastoquinol + NADP(+) + n H(+)(out). Functionally, NDH shuttles electrons from NAD(P)H:plastoquinone, via FMN and iron-sulfur (Fe-S) centers, to quinones in the photosynthetic chain and possibly in a chloroplast respiratory chain. The immediate electron acceptor for the enzyme in this species is believed to be plastoquinone. Couples the redox reaction to proton translocation, and thus conserves the redox energy in a proton gradient. In Eucalyptus globulus subsp. globulus (Tasmanian blue gum), this protein is NAD(P)H-quinone oxidoreductase subunit 4L, chloroplastic.